A 212-amino-acid polypeptide reads, in one-letter code: uncharacterized protein (212 aa).

Residues 105 to 187 (NTIYLVEGDF…QVKVVQLKGK (83 aa)) enclose the Toprim domain.

This is an uncharacterized protein from Mycoplasma pneumoniae (strain ATCC 29342 / M129 / Subtype 1) (Mycoplasmoides pneumoniae).